We begin with the raw amino-acid sequence, 1012 residues long: Translation initiation factor IF-2, chloroplastic (1012 aa).

Over residues 75–102 (GNSVSLDSNSNSSSSSKSGGDDGTGFVL) the composition is skewed to low complexity. Disordered stretches follow at residues 75–132 (GNSV…VEER), 147–294 (EKLG…KEKK), and 319–340 (APPK…RKKG). The span at 152–175 (SKVNGDKNNGSVNKPVRNNANASP) shows a compositional bias: polar residues. The segment covering 183-194 (SAASLKSKTLKS) has biased composition (low complexity). Over residues 208-231 (VVKEVPKPSYNKNEEEKSQTRGGE) the composition is skewed to basic and acidic residues. Over residues 240–257 (PQPPSKPQPLKPQQPSKP) the composition is skewed to pro residues. Residues 277–294 (VLRDKGAAETSVKSKEKK) show a composition bias toward basic and acidic residues. Residues 488-661 (DRPPVITIMG…MLVAELQELK (174 aa)) form the tr-type G domain. A G1 region spans residues 497–504 (GHVDHGKT). Position 497–504 (497–504 (GHVDHGKT)) interacts with GTP. The tract at residues 522–526 (GITQG) is G2. A G3 region spans residues 547–550 (DTPG). Residues 547 to 551 (DTPGH) and 601 to 604 (NKID) each bind GTP. Positions 601–604 (NKID) are G4. Positions 637–639 (SAL) are G5.

Belongs to the TRAFAC class translation factor GTPase superfamily. Classic translation factor GTPase family. IF-2 subfamily.

It is found in the plastid. The protein resides in the chloroplast. Its function is as follows. One of the essential components for the initiation of protein synthesis. Protects formylmethionyl-tRNA from spontaneous hydrolysis and promotes its binding to the 30S ribosomal subunits. Also involved in the hydrolysis of GTP during the formation of the 70S ribosomal complex. The sequence is that of Translation initiation factor IF-2, chloroplastic (IF2CP) from Phaseolus vulgaris (Kidney bean).